A 355-amino-acid chain; its full sequence is GTPase Obg (355 aa).

In terms of domain architecture, Obg spans 1–159 (MKLVDEAEIL…RLLKLELKLL (159 aa)). The OBG-type G domain maps to 160–342 (ADVGLLGFPN…IMKDVMAFFD (183 aa)). GTP is bound by residues 166–173 (GFPNAGKS), 191–195 (FTTLY), 213–216 (DVPG), 292–295 (NKAD), and 323–325 (SAL). 2 residues coordinate Mg(2+): Ser-173 and Thr-193.

It belongs to the TRAFAC class OBG-HflX-like GTPase superfamily. OBG GTPase family. As to quaternary structure, monomer. Mg(2+) serves as cofactor.

It localises to the cytoplasm. Functionally, an essential GTPase which binds GTP, GDP and possibly (p)ppGpp with moderate affinity, with high nucleotide exchange rates and a fairly low GTP hydrolysis rate. Plays a role in control of the cell cycle, stress response, ribosome biogenesis and in those bacteria that undergo differentiation, in morphogenesis control. This Xanthomonas axonopodis pv. citri (strain 306) protein is GTPase Obg.